The sequence spans 194 residues: GTP cyclohydrolase 1 (194 aa).

The Zn(2+) site is built by Cys-83, His-86, and Cys-155.

This sequence belongs to the GTP cyclohydrolase I family. As to quaternary structure, toroid-shaped homodecamer, composed of two pentamers of five dimers.

It catalyses the reaction GTP + H2O = 7,8-dihydroneopterin 3'-triphosphate + formate + H(+). It participates in cofactor biosynthesis; 7,8-dihydroneopterin triphosphate biosynthesis; 7,8-dihydroneopterin triphosphate from GTP: step 1/1. The sequence is that of GTP cyclohydrolase 1 from Streptococcus pyogenes serotype M5 (strain Manfredo).